A 361-amino-acid chain; its full sequence is Tetraacyldisaccharide 4'-kinase (361 aa).

ATP is bound at residue 49 to 56 (TTGGTGKT).

This sequence belongs to the LpxK family.

It carries out the reaction a lipid A disaccharide + ATP = a lipid IVA + ADP + H(+). The protein operates within glycolipid biosynthesis; lipid IV(A) biosynthesis; lipid IV(A) from (3R)-3-hydroxytetradecanoyl-[acyl-carrier-protein] and UDP-N-acetyl-alpha-D-glucosamine: step 6/6. Functionally, transfers the gamma-phosphate of ATP to the 4'-position of a tetraacyldisaccharide 1-phosphate intermediate (termed DS-1-P) to form tetraacyldisaccharide 1,4'-bis-phosphate (lipid IVA). The chain is Tetraacyldisaccharide 4'-kinase from Chlorobaculum parvum (strain DSM 263 / NCIMB 8327) (Chlorobium vibrioforme subsp. thiosulfatophilum).